The following is a 469-amino-acid chain: Glutamate--tRNA ligase (469 aa).

Residues 9–19 (PSPTGMFHVGG) carry the 'HIGH' region motif. Zn(2+) is bound by residues Cys100, Cys102, Cys122, and Asp124. Positions 232-236 (KLSKR) match the 'KMSKS' region motif. Lys235 contributes to the ATP binding site.

The protein belongs to the class-I aminoacyl-tRNA synthetase family. Glutamate--tRNA ligase type 1 subfamily. Monomer. Requires Zn(2+) as cofactor.

It is found in the cytoplasm. It catalyses the reaction tRNA(Glu) + L-glutamate + ATP = L-glutamyl-tRNA(Glu) + AMP + diphosphate. Functionally, catalyzes the attachment of glutamate to tRNA(Glu) in a two-step reaction: glutamate is first activated by ATP to form Glu-AMP and then transferred to the acceptor end of tRNA(Glu). This Salinispora arenicola (strain CNS-205) protein is Glutamate--tRNA ligase.